The sequence spans 566 residues: Glucose-6-phosphate isomerase, cytosolic (566 aa).

Glutamate 360 functions as the Proton donor in the catalytic mechanism. Catalysis depends on residues histidine 391 and lysine 516.

It belongs to the GPI family. Homodimer.

It localises to the cytoplasm. The enzyme catalyses alpha-D-glucose 6-phosphate = beta-D-fructose 6-phosphate. The protein operates within carbohydrate degradation; glycolysis; D-glyceraldehyde 3-phosphate and glycerone phosphate from D-glucose: step 2/4. The sequence is that of Glucose-6-phosphate isomerase, cytosolic (PGIC) from Spinacia oleracea (Spinach).